We begin with the raw amino-acid sequence, 324 residues long: Lactonase drp35 (324 aa).

The Ca(2+) site is built by Glu47, Ser109, Gly111, Asp129, Thr132, Tyr134, Asp137, Asn184, Asp235, and Ser236. Asp235 (proton donor) is an active-site residue.

It belongs to the SMP-30/CGR1 family. Requires Ca(2+) as cofactor.

Its subcellular location is the cytoplasm. In terms of biological role, exhibits lactonase activity. Acts in cells with perturbed membrane integrity and is possibly related to the membrane homeostasis. The polypeptide is Lactonase drp35 (drp35) (Staphylococcus saprophyticus subsp. saprophyticus (strain ATCC 15305 / DSM 20229 / NCIMB 8711 / NCTC 7292 / S-41)).